A 280-amino-acid polypeptide reads, in one-letter code: uncharacterized protein (280 aa).

6 consecutive transmembrane segments (helical) span residues 46 to 66 (LIFL…FVCT), 81 to 101 (IACS…FLIP), 114 to 134 (FFYL…SWVV), 137 to 157 (VWHF…IKLQ), 170 to 190 (ILFI…LLEL), and 225 to 245 (IVAC…ALIV). The interval 258-280 (ESGSIEKKNKSSPPPRTWQSNYQ) is disordered.

Belongs to the TatC family.

Its subcellular location is the mitochondrion membrane. This is an uncharacterized protein from Arabidopsis thaliana (Mouse-ear cress).